Here is a 209-residue protein sequence, read N- to C-terminus: 8-oxoguanine DNA glycosylase/AP lyase (209 aa).

Active-site residues include lysine 132 and aspartate 150.

The protein belongs to the type-2 OGG1 family.

The catalysed reaction is 2'-deoxyribonucleotide-(2'-deoxyribose 5'-phosphate)-2'-deoxyribonucleotide-DNA = a 3'-end 2'-deoxyribonucleotide-(2,3-dehydro-2,3-deoxyribose 5'-phosphate)-DNA + a 5'-end 5'-phospho-2'-deoxyribonucleoside-DNA + H(+). Its function is as follows. Catalyzes the excision of an oxidatively damaged form of guanine (7,8-dihydro-8-oxoguanine = 8-oxoG) from DNA. Also cleaves the DNA backbone at apurinic/apyrimidinic sites (AP sites). In Picrophilus torridus (strain ATCC 700027 / DSM 9790 / JCM 10055 / NBRC 100828 / KAW 2/3), this protein is 8-oxoguanine DNA glycosylase/AP lyase.